Reading from the N-terminus, the 504-residue chain is Facilitated trehalose transporter Tret1 (504 aa).

The Cytoplasmic portion of the chain corresponds to 1–39; the sequence is MELNNKEDSPRHTVPFVRQITEDGKAKLEIYRPTTNPIY. The chain crosses the membrane as a helical span at residues 40 to 60; the sequence is IYTQILAAIAVSMGSMVVGFA. Over 61–87 the chain is Extracellular; the sequence is SAYTSPALVSMQNTTITSFKVTEQEAS. N-linked (GlcNAc...) asparagine glycosylation is present at asparagine 73. A helical transmembrane segment spans residues 88 to 108; sequence WVGGIMPLAGLAGGIAGGPFI. At 109-120 the chain is on the cytoplasmic side; that stretch reads EYLGRKNTILAT. A helical membrane pass occupies residues 121–141; sequence AVPFIVAWLLIAFANSIWMVL. Topologically, residues 142–145 are extracellular; it reads AGRA. The chain crosses the membrane as a helical span at residues 146 to 166; that stretch reads LSGFCVGIASLSLPVYLGETV. Topologically, residues 167-171 are cytoplasmic; the sequence is QPEVR. Residues 172-192 form a helical membrane-spanning segment; the sequence is GTLGLLPTAFGNIGILICFVA. The Extracellular segment spans residues 193–199; it reads GKYVNWS. Asparagine 197 is a glycosylation site (N-linked (GlcNAc...) asparagine). Residues 200–220 form a helical membrane-spanning segment; the sequence is GLAFIGSILPIPFMVLTLLIP. Over 221-283 the chain is Cytoplasmic; sequence ETPRWFVTRG…DLMKRSNLKP (63 aa). A helical transmembrane segment spans residues 284–304; it reads LLIALGLMFFQQLSGINAVIF. Over 305–320 the chain is Extracellular; sequence YTVSIFKDAGSTIDEN. A helical transmembrane segment spans residues 321-341; the sequence is LCTIIVGVVNFGATFFATVLI. Topologically, residues 342–347 are cytoplasmic; it reads DRLGRK. A helical membrane pass occupies residues 348–368; it reads ILLYISEVAMVITLLTLGTFF. At 369 to 387 the chain is on the extracellular side; that stretch reads YYKNSGNDVSNIGWLPLAS. A helical transmembrane segment spans residues 388 to 408; the sequence is FVIYVIGFSSGVGPIPWLMLG. Topologically, residues 409 to 424 are cytoplasmic; the sequence is EILPGKIRGSAASVAT. Residues 425 to 445 form a helical membrane-spanning segment; it reads GFNWTCTFIVTKTFADIVAAI. Residues 446 to 448 lie on the Extracellular side of the membrane; sequence GNH. Residues 449 to 469 form a helical membrane-spanning segment; that stretch reads GAFWFFGVICLIGLFFVIFFV. The Cytoplasmic segment spans residues 470-504; it reads PETQGKSLEEIERKMMGRVRRMSSVANMKPLSFNM.

This sequence belongs to the major facilitator superfamily. Sugar transporter (TC 2.A.1.1) family. Trehalose transporter subfamily. In terms of tissue distribution, highest expression in the fat body. Not expressed in other tissues including the midgut, muscle, and integuments after 24 hours of dehydration.

Its subcellular location is the cell membrane. High-capacity facilitative transporter for trehalose, required to induce anhydrobiosis. Anhydrobiotic larvae can survive almost complete dehydration. Does not transport maltose, sucrose or lactose. Mediates the bidirectional transfer of trehalose. Responsible for the transport of trehalose synthesized in the fat body and the incorporation of trehalose into other tissues that require a carbon source, thereby regulating trehalose levels in the hemolymph. The polypeptide is Facilitated trehalose transporter Tret1 (Polypedilum vanderplanki (Sleeping chironomid midge)).